We begin with the raw amino-acid sequence, 274 residues long: MQAILSSWFIQGMIKATSDMWHKGWDERNGGNISLRLLAEEVEPYRRDFYQQPRKVELTQPAPELANSWFLVTGSGKFFRNVELNPAENLVLLQVSNDGMAYDIHWGLTQGGLPTSELAAHFQSHIVRMQVSGGTNRVIMHCHATNLIALSYVQKLENASFTRLLWEGSTECLVVFPDGIGIVPWMVPGTDGIGTQTAEQMREHSLVLWPFHGIFGSGPTLDDAFGLIDTAEKSAEIMVKVLSMGGKKQTISREQLIALAARFDVTPMAAALDA.

The active site involves glutamate 117. 3 residues coordinate Zn(2+): histidine 141, histidine 143, and histidine 212.

This sequence belongs to the aldolase class II family. RhaD subfamily. Homotetramer. Requires Zn(2+) as cofactor.

It localises to the cytoplasm. It carries out the reaction L-rhamnulose 1-phosphate = (S)-lactaldehyde + dihydroxyacetone phosphate. Its pathway is carbohydrate degradation; L-rhamnose degradation; glycerone phosphate from L-rhamnose: step 3/3. Functionally, catalyzes the reversible cleavage of L-rhamnulose-1-phosphate to dihydroxyacetone phosphate (DHAP) and L-lactaldehyde. The chain is Rhamnulose-1-phosphate aldolase from Yersinia pseudotuberculosis serotype I (strain IP32953).